A 94-amino-acid chain; its full sequence is Co-chaperonin GroES (94 aa).

The protein belongs to the GroES chaperonin family. As to quaternary structure, heptamer of 7 subunits arranged in a ring. Interacts with the chaperonin GroEL.

Its subcellular location is the cytoplasm. Together with the chaperonin GroEL, plays an essential role in assisting protein folding. The GroEL-GroES system forms a nano-cage that allows encapsulation of the non-native substrate proteins and provides a physical environment optimized to promote and accelerate protein folding. GroES binds to the apical surface of the GroEL ring, thereby capping the opening of the GroEL channel. This chain is Co-chaperonin GroES, found in Clostridium perfringens (strain SM101 / Type A).